A 587-amino-acid chain; its full sequence is Probable phosphoribomutase (587 aa).

Substrate-binding positions include Thr-49, Arg-53, and 149–150; that span reads SH. The active-site Phosphoserine intermediate is Ser-149. Mg(2+)-binding residues include Ser-149, Asp-306, Asp-308, and Asp-310. Ser-149 is subject to Phosphoserine. Residues 310–311, Thr-380, 404–406, and Lys-418 contribute to the substrate site; these read DR and EEA.

This sequence belongs to the phosphohexose mutase family. Requires Mg(2+) as cofactor.

The protein resides in the cytoplasm. The protein localises to the nucleus. It catalyses the reaction alpha-D-ribose 1-phosphate = D-ribose 5-phosphate. Converts ribose 1-phosphate to ribose 5-phosphate. Involved in ribose salvage via the pentose phosphate pathway. This chain is Probable phosphoribomutase, found in Schizosaccharomyces pombe (strain 972 / ATCC 24843) (Fission yeast).